Reading from the N-terminus, the 246-residue chain is ATP synthase subunit b 1 (246 aa).

The chain crosses the membrane as a helical span at residues 5–27; the sequence is WFTFTAQVINFLVLVGLLRYFLY.

The protein belongs to the ATPase B chain family. As to quaternary structure, F-type ATPases have 2 components, F(1) - the catalytic core - and F(0) - the membrane proton channel. F(1) has five subunits: alpha(3), beta(3), gamma(1), delta(1), epsilon(1). F(0) has three main subunits: a(1), b(2) and c(10-14). The alpha and beta chains form an alternating ring which encloses part of the gamma chain. F(1) is attached to F(0) by a central stalk formed by the gamma and epsilon chains, while a peripheral stalk is formed by the delta and b chains.

The protein localises to the cell inner membrane. In terms of biological role, f(1)F(0) ATP synthase produces ATP from ADP in the presence of a proton or sodium gradient. F-type ATPases consist of two structural domains, F(1) containing the extramembraneous catalytic core and F(0) containing the membrane proton channel, linked together by a central stalk and a peripheral stalk. During catalysis, ATP synthesis in the catalytic domain of F(1) is coupled via a rotary mechanism of the central stalk subunits to proton translocation. Functionally, component of the F(0) channel, it forms part of the peripheral stalk, linking F(1) to F(0). This chain is ATP synthase subunit b 1, found in Rhodopirellula baltica (strain DSM 10527 / NCIMB 13988 / SH1).